The primary structure comprises 61 residues: Small ribosomal subunit protein uS14B (61 aa).

Zn(2+) contacts are provided by C24, C27, C40, and C43.

The protein belongs to the universal ribosomal protein uS14 family. Zinc-binding uS14 subfamily. Part of the 30S ribosomal subunit. Contacts proteins S3 and S10. Zn(2+) is required as a cofactor.

Its function is as follows. Binds 16S rRNA, required for the assembly of 30S particles and may also be responsible for determining the conformation of the 16S rRNA at the A site. In Limosilactobacillus reuteri (strain DSM 20016) (Lactobacillus reuteri), this protein is Small ribosomal subunit protein uS14B.